The chain runs to 78 residues: Surfactant-associated protein 2 (78 aa).

A signal peptide spans 1 to 19 (MGSGLPLVLLLTLLGSSHG). A glycan (N-linked (GlcNAc...) asparagine) is linked at Asn-37.

N-glycosylated. Predominantly expressed in lung, where it is detected in type II pneumocytes in the alveolus, and in nonciliated epithelium in bronchioli (at protein level). Also detected at lower levels in cervix, esophagus, stomach, testis and kidney.

It localises to the secreted. It is found in the cytoplasmic vesicle. The protein localises to the secretory vesicle. The protein resides in the golgi apparatus. Functionally, putative surfactant protein. The protein is Surfactant-associated protein 2 (SFTA2) of Homo sapiens (Human).